The following is a 200-amino-acid chain: MIKLIVGLGNPGAEYTATRHNAGFWLVDQLAREAGTTLRDERRFHGFYAKARLHGEEVHLLEPQTYMNRSGQSVVAVAQFFKILPDEILVAHDELDLPPGSIKLKLGGGSGGHNGLKDITAHLSSQQYWRLRIGIGHPRDLIPESARAGAKPDVANYVLKPPRREEQDVIDASIERGLAVMPQIIKGELERAMMQLHRNP.

Position 15 (tyrosine 15) interacts with tRNA. Catalysis depends on histidine 20, which acts as the Proton acceptor. Residues tyrosine 66, asparagine 68, and asparagine 114 each contribute to the tRNA site.

Belongs to the PTH family. In terms of assembly, monomer.

The protein localises to the cytoplasm. It catalyses the reaction an N-acyl-L-alpha-aminoacyl-tRNA + H2O = an N-acyl-L-amino acid + a tRNA + H(+). Hydrolyzes ribosome-free peptidyl-tRNAs (with 1 or more amino acids incorporated), which drop off the ribosome during protein synthesis, or as a result of ribosome stalling. Functionally, catalyzes the release of premature peptidyl moieties from peptidyl-tRNA molecules trapped in stalled 50S ribosomal subunits, and thus maintains levels of free tRNAs and 50S ribosomes. The chain is Peptidyl-tRNA hydrolase from Paraburkholderia phytofirmans (strain DSM 17436 / LMG 22146 / PsJN) (Burkholderia phytofirmans).